The sequence spans 923 residues: MSHYDFKAIEQKWQQYWKNNQIFRTTIEPSKPKYYILDMFPYPSGEGLHVGHPLGYIASDIVARYKRSKGYQVLHPMGFDAFGLPAEQFAIQTGQHPAITTAKNIGRYKQQLCQLGLSYDWDRCISTCEPAYYKWTQWIFIQLFNSWYDISLQKARPIDELITLFDQQGNQQVQASCDKEVSLFTAKEWQAMDEESKQQHLLAYRLAFLEDTTVNWCPELGTVLANEEVKDGLSERGGYPVIRKQMKQWSLRITAYTDRLLAGLEHLKWPLSTKEMQRNWIGRSIGAELNFTVIANGQEHTIPVFTTRPDTLFGVTYLALSPEHPLAKLISTGTQQAAIDTYITQATNRSERDRLADVNHVTGMFTGAYAIHPFTKQPLPIWIADYVLAGYGTGAVMGVPAHDSRDYAFAQHFQLPIIQVVAGGDTAQSAYEAREGSLFNSQFLNGLSIQEATKQAIQKLESLGIGKQKTTYRLRNAIFSRQRYWGEPIPIYYKNNIPYPIPAEELPLELPSLASFKPTPTGEPPLGHAPNWKTKEGYPIELSTMPGWAGSSWYFFRYMDPNNEASFVGSTAQNYWQAVDLYLGGAEHATGHLLYARFWTQFLYDLGYVNIEEPFQELIHQGMIQGKSSFVYRIKGTNQFVSYNLRHAYETTAMHVDIHLVKNNILDLERFKNWRPDLQTATFVLENGQYICGSEVEKMSKSKYNTVNPDTVVEQYGADTLRLYTMFLGPIEQAKPWDMHGIEGVFRFLVKVWRLFYLEKGAIITNEVPTKEVQKAIHKAIKKVEEDIKRYAFNTAVSNLMICVNELTALKCNNRAALTNLVLILAPFAPHLAEELWEILGHQHSIAQAPFPTYEEIYLQEETYEYPIAINGKVRAKINFPVDMPQGQIEEQVLTHESIQKWIQGQQIKRVIVISSKMVNIVI.

Positions 41–52 (PYPSGEGLHVGH) match the 'HIGH' region motif. Positions 698-702 (KMSKS) match the 'KMSKS' region motif. Residue Lys-701 coordinates ATP.

This sequence belongs to the class-I aminoacyl-tRNA synthetase family.

The protein localises to the cytoplasm. The enzyme catalyses tRNA(Leu) + L-leucine + ATP = L-leucyl-tRNA(Leu) + AMP + diphosphate. The polypeptide is Leucine--tRNA ligase (Amoebophilus asiaticus (strain 5a2)).